An 88-amino-acid polypeptide reads, in one-letter code: Eclosion hormone (88 aa).

The signal sequence occupies residues 1 to 26; the sequence is MAGKVTVAFFMFAMIAFLANFGYVEC. 3 cysteine pairs are disulfide-bonded: cysteine 40–cysteine 64, cysteine 44–cysteine 60, and cysteine 47–cysteine 75.

Belongs to the insect eclosion hormone family.

It localises to the secreted. Its function is as follows. Neuropeptide that triggers the performance of ecdysis behaviors at the end of a molt. It triggers adult behavior patterns: larval, pupal and adult ecdysis, and plasticization during the molt. This Manduca sexta (Tobacco hawkmoth) protein is Eclosion hormone.